The chain runs to 1124 residues: Transient-receptor-potential-like protein (1124 aa).

The tract at residues 1–24 is disordered; that stretch reads MGRKKKLPTGVSSGVSHASSAPKS. Residues 1–340 lie on the Cytoplasmic side of the membrane; it reads MGRKKKLPTG…GFRRKSIVDK (340 aa). A compositionally biased stretch (low complexity) spans 10–21; that stretch reads GVSSGVSHASSA. ANK repeat units follow at residues 40-69, 78-107, and 152-181; these read LEEK…RHQH, LGRR…ETKD, and PDIT…AVPV. The chain crosses the membrane as a helical span at residues 341–361; sequence VICIAQVAVLFPLYCLIYMCA. The Extracellular segment spans residues 362–373; sequence PNCRTGQLMRKP. A helical membrane pass occupies residues 374–394; the sequence is FMKFLIHASSYLFFLFILILV. Residues 395–431 lie on the Cytoplasmic side of the membrane; sequence SQRADDDFVRIFGTTRMKKELAEQELRQRGQTPSKLE. A helical membrane pass occupies residues 432–452; that stretch reads LIVVMYVIGFVWEEVQEIFAV. Residues 453–512 are Extracellular-facing; that stretch reads GMKSYLRNMWNFIDFLRNSLYVSVMCLRAFAYIQQATEIARDPQMAYIPREKWHDFDPQL. A helical membrane pass occupies residues 513-533; that stretch reads IAEGLFAAANVFSALKLVHLF. Residues 534–548 lie on the Cytoplasmic side of the membrane; sequence SINPHLGPLQISLGR. A helical transmembrane segment spans residues 549-569; sequence MVIDIVKFFFIYTLVLFAFAC. The Extracellular segment spans residues 570–645; sequence GLNQLLWYFA…GIKSYTRFWG (76 aa). Residues 646 to 666 traverse the membrane as a helical segment; sequence LLMFGSYSVINVIVLLNLLIA. At 667-1124 the chain is on the cytoplasmic side; the sequence is MMSNSYAMID…TSPQRPKHRN (458 aa). 2 calmodulin-binding regions span residues 710-728 and 853-895; these read SVKW…IDRQ and IPSK…SQIG. 2 disordered regions span residues 978–1013 and 1031–1124; these read RAMA…GVSH and LIAN…KHRN. The span at 1035 to 1063 shows a compositional bias: low complexity; sequence SAPSAPTAPPKKSAPTAPTPTYKPTTHAP. Basic and acidic residues-rich tracts occupy residues 1069-1081 and 1090-1106; these read GNRE…DGVR and HVVD…RDNV. Residues 1107–1118 are compositionally biased toward polar residues; it reads SDISSIASTSPQ.

The protein belongs to the transient receptor (TC 1.A.4) family. STrpC subfamily. In terms of assembly, forms heteromultimers with Trpgamma and, to a lower extent, with trp. Interacts with Fkbp59 in vivo and is found in the inaD signaling complex. Expressed predominantly in the rhabdomeres of photoreceptor cells.

The protein localises to the membrane. Its subcellular location is the cell projection. The protein resides in the rhabdomere membrane. Functionally, a light-sensitive calcium channel that is required for inositide-mediated Ca(2+) entry in the retina during phospholipase C (PLC)-mediated phototransduction. Required for vision in the dark and in dim light. Binds calmodulin. Trp and trpl act together in the light response, although it is unclear whether as heteromultimers or distinct units. Also forms a functional cation channel with Trpgamma. Activated by fatty acids, metabolic stress, inositols and GTP-binding proteins. The protein is Transient-receptor-potential-like protein (trpl) of Drosophila melanogaster (Fruit fly).